A 172-amino-acid polypeptide reads, in one-letter code: Shikimate kinase (172 aa).

Residue 11-16 coordinates ATP; that stretch reads GAGKST. S15 lines the Mg(2+) pocket. D33, R57, and G79 together coordinate substrate. Residue R117 participates in ATP binding. A substrate-binding site is contributed by R136. Residue R153 participates in ATP binding.

Belongs to the shikimate kinase family. As to quaternary structure, monomer. The cofactor is Mg(2+).

The protein localises to the cytoplasm. The catalysed reaction is shikimate + ATP = 3-phosphoshikimate + ADP + H(+). Its pathway is metabolic intermediate biosynthesis; chorismate biosynthesis; chorismate from D-erythrose 4-phosphate and phosphoenolpyruvate: step 5/7. Catalyzes the specific phosphorylation of the 3-hydroxyl group of shikimic acid using ATP as a cosubstrate. The protein is Shikimate kinase of Pseudomonas syringae pv. tomato (strain ATCC BAA-871 / DC3000).